The primary structure comprises 513 residues: ATP synthase subunit alpha (513 aa).

169-176 (GDRQCGKT) is an ATP binding site.

It belongs to the ATPase alpha/beta chains family. F-type ATPases have 2 components, CF(1) - the catalytic core - and CF(0) - the membrane proton channel. CF(1) has five subunits: alpha(3), beta(3), gamma(1), delta(1), epsilon(1). CF(0) has three main subunits: a(1), b(2) and c(9-12). The alpha and beta chains form an alternating ring which encloses part of the gamma chain. CF(1) is attached to CF(0) by a central stalk formed by the gamma and epsilon chains, while a peripheral stalk is formed by the delta and b chains.

The protein resides in the cell inner membrane. It catalyses the reaction ATP + H2O + 4 H(+)(in) = ADP + phosphate + 5 H(+)(out). Its function is as follows. Produces ATP from ADP in the presence of a proton gradient across the membrane. The alpha chain is a regulatory subunit. The polypeptide is ATP synthase subunit alpha (Burkholderia mallei (strain NCTC 10229)).